A 285-amino-acid polypeptide reads, in one-letter code: Complement C1q tumor necrosis factor-related protein 2 (285 aa).

An N-terminal signal peptide occupies residues 1 to 15 (MIPWVLLACALPCAA). The disordered stretch occupies residues 33 to 144 (QLVCSLPGPQ…PGLPGPCSCG (112 aa)). The 102-residue stretch at 40–141 (GPQGPPGPPG…KGEPGLPGPC (102 aa)) folds into the Collagen-like domain. A compositionally biased stretch (pro residues) spans 41-51 (PQGPPGPPGAP). Low complexity predominate over residues 53-65 (PSGMMGRMGFPGK). Positions 66–78 (DGQDGHDGDRGDS) are enriched in basic and acidic residues. The span at 84 to 120 (PGRTGNRGKPGPKGKAGAIGRAGPRGPKGVNGTPGKH) shows a compositional bias: low complexity. The 137-residue stretch at 145 to 281 (SGHTKSAFSV…GFLIYADQDD (137 aa)) folds into the C1q domain.

May interact with ERFE. Expressed in adipose tissue.

The protein resides in the secreted. Its function is as follows. Involved in the regulation of lipid metabolism in adipose tissue and liver. This Homo sapiens (Human) protein is Complement C1q tumor necrosis factor-related protein 2 (C1QTNF2).